The chain runs to 368 residues: Ferredoxin--NADP reductase (368 aa).

The FAD site is built by Asp-56, Gln-64, Tyr-69, Val-109, Phe-144, Asp-310, and Thr-351.

The protein belongs to the ferredoxin--NADP reductase type 2 family. As to quaternary structure, homodimer. FAD is required as a cofactor.

The catalysed reaction is 2 reduced [2Fe-2S]-[ferredoxin] + NADP(+) + H(+) = 2 oxidized [2Fe-2S]-[ferredoxin] + NADPH. This chain is Ferredoxin--NADP reductase, found in Leptothrix cholodnii (strain ATCC 51168 / LMG 8142 / SP-6) (Leptothrix discophora (strain SP-6)).